The primary structure comprises 701 residues: Glycine--tRNA ligase beta subunit (701 aa).

It belongs to the class-II aminoacyl-tRNA synthetase family. In terms of assembly, tetramer of two alpha and two beta subunits.

Its subcellular location is the cytoplasm. It catalyses the reaction tRNA(Gly) + glycine + ATP = glycyl-tRNA(Gly) + AMP + diphosphate. This Anaeromyxobacter dehalogenans (strain 2CP-1 / ATCC BAA-258) protein is Glycine--tRNA ligase beta subunit.